Consider the following 254-residue polypeptide: Ubiquinone biosynthesis O-methyltransferase (254 aa).

Residues R47, G76, D97, and L141 each coordinate S-adenosyl-L-methionine.

This sequence belongs to the methyltransferase superfamily. UbiG/COQ3 family.

The catalysed reaction is a 3-demethylubiquinol + S-adenosyl-L-methionine = a ubiquinol + S-adenosyl-L-homocysteine + H(+). It catalyses the reaction a 3-(all-trans-polyprenyl)benzene-1,2-diol + S-adenosyl-L-methionine = a 2-methoxy-6-(all-trans-polyprenyl)phenol + S-adenosyl-L-homocysteine + H(+). It functions in the pathway cofactor biosynthesis; ubiquinone biosynthesis. In terms of biological role, O-methyltransferase that catalyzes the 2 O-methylation steps in the ubiquinone biosynthetic pathway. The protein is Ubiquinone biosynthesis O-methyltransferase of Maricaulis maris (strain MCS10) (Caulobacter maris).